A 100-amino-acid chain; its full sequence is UPF0213 protein YhbQ (100 aa).

The GIY-YIG domain occupies 2-77 (TPWFLYLIRT…KQLTKRQKER (76 aa)).

This sequence belongs to the UPF0213 family.

The chain is UPF0213 protein YhbQ from Escherichia fergusonii (strain ATCC 35469 / DSM 13698 / CCUG 18766 / IAM 14443 / JCM 21226 / LMG 7866 / NBRC 102419 / NCTC 12128 / CDC 0568-73).